We begin with the raw amino-acid sequence, 290 residues long: Ribosomal RNA small subunit methyltransferase A (290 aa).

Asparagine 27, leucine 29, glycine 54, glutamate 75, aspartate 100, and asparagine 125 together coordinate S-adenosyl-L-methionine.

This sequence belongs to the class I-like SAM-binding methyltransferase superfamily. rRNA adenine N(6)-methyltransferase family. RsmA subfamily.

The protein resides in the cytoplasm. It carries out the reaction adenosine(1518)/adenosine(1519) in 16S rRNA + 4 S-adenosyl-L-methionine = N(6)-dimethyladenosine(1518)/N(6)-dimethyladenosine(1519) in 16S rRNA + 4 S-adenosyl-L-homocysteine + 4 H(+). In terms of biological role, specifically dimethylates two adjacent adenosines (A1518 and A1519) in the loop of a conserved hairpin near the 3'-end of 16S rRNA in the 30S particle. May play a critical role in biogenesis of 30S subunits. The protein is Ribosomal RNA small subunit methyltransferase A of Streptococcus pneumoniae (strain P1031).